The following is a 132-amino-acid chain: Myelin P2 protein (132 aa).

Serine 2 bears the N-acetylserine mark. Arginine 107 lines the (9Z)-octadecenoate pocket. Arginine 107 lines the hexadecanoate pocket. Cysteine 118 and cysteine 125 form a disulfide bridge. 127 to 129 (RIY) provides a ligand contact to (9Z)-octadecenoate. 127–129 (RIY) provides a ligand contact to hexadecanoate.

The protein belongs to the calycin superfamily. Fatty-acid binding protein (FABP) family. Monomer.

The protein localises to the cytoplasm. In terms of biological role, may play a role in lipid transport protein in Schwann cells. May bind cholesterol. This Bos taurus (Bovine) protein is Myelin P2 protein (PMP2).